Here is a 536-residue protein sequence, read N- to C-terminus: Chaperonin GroEL 2 (536 aa).

ATP is bound by residues 29–32, 86–90, glycine 412, and aspartate 495; these read TLGP and DGTTT.

The protein belongs to the chaperonin (HSP60) family. In terms of assembly, forms a cylinder of 14 subunits composed of two heptameric rings stacked back-to-back. Interacts with the co-chaperonin GroES.

The protein resides in the cytoplasm. It carries out the reaction ATP + H2O + a folded polypeptide = ADP + phosphate + an unfolded polypeptide.. Its function is as follows. Together with its co-chaperonin GroES, plays an essential role in assisting protein folding. The GroEL-GroES system forms a nano-cage that allows encapsulation of the non-native substrate proteins and provides a physical environment optimized to promote and accelerate protein folding. This Arthrobacter sp. (strain FB24) protein is Chaperonin GroEL 2.